A 182-amino-acid polypeptide reads, in one-letter code: ATP synthase subunit delta (182 aa).

This sequence belongs to the ATPase delta chain family. F-type ATPases have 2 components, F(1) - the catalytic core - and F(0) - the membrane proton channel. F(1) has five subunits: alpha(3), beta(3), gamma(1), delta(1), epsilon(1). F(0) has three main subunits: a(1), b(2) and c(10-14). The alpha and beta chains form an alternating ring which encloses part of the gamma chain. F(1) is attached to F(0) by a central stalk formed by the gamma and epsilon chains, while a peripheral stalk is formed by the delta and b chains.

It is found in the cell membrane. Its activity is regulated as follows. Increases 2-fold following exposure to low pH. In terms of biological role, f(1)F(0) ATP synthase produces ATP from ADP in the presence of a proton or sodium gradient. F-type ATPases consist of two structural domains, F(1) containing the extramembraneous catalytic core and F(0) containing the membrane proton channel, linked together by a central stalk and a peripheral stalk. During catalysis, ATP synthesis in the catalytic domain of F(1) is coupled via a rotary mechanism of the central stalk subunits to proton translocation. Its function is as follows. This protein is part of the stalk that links CF(0) to CF(1). It either transmits conformational changes from CF(0) to CF(1) or is implicated in proton conduction. This is ATP synthase subunit delta from Lactobacillus acidophilus (strain ATCC 700396 / NCK56 / N2 / NCFM).